Reading from the N-terminus, the 1450-residue chain is MISKRRRLDSEDKENLTEDASKTMPLSKLAKKSHNSHEVEENGSVFVKLLKASGLTLKTGENQNQLGVDQVIFQRKLFQALRKHPAYPKVIEEFVNGLESYTEDSESLRNCLLSCERLQDEEASMGTFYSKSLIKLLLGIDILQPAIIKMLFEKVPQFLFESENRDGINMARLIINQLKWLDRIVDGKDLTAQMMQLISVAPVNLQHDFITSLPEILGDSQHANVGKELGELLVQNTSLTVPILDVFSSLRLDPNFLSKIRQLVMGKLSSVRLEDFPVIVKFLLHSVTDTTSLEVIAELRENLNVQQFILPSRIQASQSKLKSKGLASSSGNQENSDKDCIVLVFDVIKSAIRYEKTISEAWFKAIERIESAAEHKALDVVMLLIIYSTSTQTKKGVEKLLRNKIQSDCIQEQLLDSAFSTHYLVLKDICPSILLLAQTLFHSQDQRIILFGSLLYKYAFKFFDTYCQQEVVGALVTHVCSGTEAEVDTALDVLLELIVLNASAMRLNAAFVKGILDYLENMSPQQIRKIFCILSTLAFSQQPGTSNHIQDDMHLVIRKQLSSTVFKYKLIGIIGAVTMAGIMAEDRSVPSNSSQRSANVSSEQRTQVTSLLQLVHSCTEHSPWASSLYYDEFANLIQERKLAPKTLEWVGQTIFNDFQDAFVVDFCAAPEGDFPFPVKALYGLEEYSTQDGIVINLLPLFYQECAKDASRATSQESSQRSMSSLCLASHFRLLRLCVARQHDGNLDEIDGLLDCPLFLPDLEPGEKLESMSAKDRSLMCSLTFLTFNWFREVVNAFCQQTSPEMKGKVLSRLKDLVELQGILEKYLAVIPDYVPPFASVDLDTLDMMPRSSSAVAAKNRNKGKTGGKKQKADSNKASCSDTLLTEDTSECDMAPSGRSHVDKESTGKEGKTFVSLQNYRAFFRELDIEVFSILHSGLVTKFILDTEMHTEATEVVQLGPAELLFLLEDLSQKLENMLTAPFAKRICCFKNKGRQNIGFSHLHQRSVQDIVHCVVQLLTPMCNHLENIHNFFQCLGAEHLSADDKARATAQEQHTMACCYQKLLQVLHALFAWKGFTHQSKHRLLHSALEVLSNRLKQMEQDQPLEELVSQSFSYLQNFHHSVPSFQCGLYLLRLLMALLEKSAVPNQKKEKLASLAKQLLCRAWPHGEKEKNPTFNDHLHDVLYIYLEHTDNVLKAIEEITGVGVPELVSAPKDAASSTFPTLTRHTFVIFFRVMMAELEKTVKGLQAGTAADSQQVHEEKLLYWNMAVRDFSILLNLMKVFDSYPVLHVCLKYGRRFVEAFLKQCMPLLDFSFRKHREDVLSLLQTLQLNTRLLHHLCGHSKIRQDTRLTKHVPLLKKSLELLVCRVKAMLVLNNCREAFWLGTLKNRDLQGEEIISQDPSSSESNAEDSEDGVTSHVSRNRATEDGEDEASDEQKDQDSDESDDSSS.

The interval M1–H37 is disordered. The interaction with FANCE stretch occupies residues M1–D289. Residues L8–S21 show a composition bias toward basic and acidic residues. A Phosphoserine modification is found at S220. Residues V246–T357 are interaction with BRCA2. K559 is covalently cross-linked (Glycyl lysine isopeptide (Lys-Gly) (interchain with G-Cter in ubiquitin)). S714 carries the post-translational modification Phosphoserine. Residues S853 to C879 are disordered. Residues N859–K869 show a composition bias toward basic residues. Residues S1255, S1404, and S1412 each carry the phosphoserine modification. Positions I1398–S1450 are disordered. T1426 is subject to Phosphothreonine. S1434 carries the post-translational modification Phosphoserine. Over residues D1441–S1450 the composition is skewed to acidic residues.

The protein belongs to the Fanconi anemia protein FANCD2 family. Homodimer; cannot be ubiquitinated and does not bind DNA. Part of a FANCI-FANCD2 heterodimeric complex that binds and scans dsDNA for DNA damage. Interacts directly with FANCE and FANCI. Interacts with USP1 and MEN1. The ubiquitinated form specifically interacts with BRCA1 and BLM. Both the nonubiquitinated and the monoubiquitinated forms interact with BRCA2; this interaction is mediated by phosphorylated FANCG and the complex also includes XCCR3. The ubiquitinated form specifically interacts with MTMR15/FAN1 (via UBZ-type zinc finger), leading to recruit MTMR15/FAN1 to sites of DNA damage. Interacts with DCLRE1B/Apollo. Interacts with POLN. Interacts with UHRF1 and UHRF2; these interactions promote FANCD2 activation. In terms of processing, monoubiquitinated on Lys-559 during S phase and upon genotoxic stress by FANCL in complex with E2 ligases UBE2T or UBE2W. Deubiquitinated by USP1 as cells enter G2/M, or once DNA repair is completed. Monoubiquitination requires the joint intervention of the FANC core complex, including FANCA, FANCB, FANCC, FANCE, FANCF, FANCG, and FANCM, and proteins involved in cell cycle checkpoints and DNA repair, including RPA1, ATR, CHEK1 and BRCA1, and is mediated by FANCL/PHF9. Monoubiquitination prevents DNA release from the FANCI-FANCD2 complex. FANCD2 is only ubiquitinated in the FANCI-FANCD2 complex and the monoubiquitination of FANCD2 is promoted by phosphorylation of FANCI. Ubiquitination is required for binding to chromatin, interaction with BRCA1, BRCA2 and MTMR15/FAN1, DNA repair, and normal cell cycle progression. Post-translationally, phosphorylated on several sites including Ser-220 and Ser-1399 in response to genotoxic stress by ATM and/or ATR.

The protein localises to the nucleus. In terms of biological role, required for maintenance of chromosomal stability. Promotes accurate and efficient pairing of homologs during meiosis. Involved in the repair of DNA double-strand breaks, both by homologous recombination and single-strand annealing. The FANCI-FANCD2 complex binds and scans double-stranded DNA (dsDNA) for DNA damage; this complex stalls at DNA junctions between double-stranded DNA and single-stranded DNA. May participate in S phase and G2 phase checkpoint activation upon DNA damage. Plays a role in preventing breakage and loss of missegregating chromatin at the end of cell division, particularly after replication stress. Promotes BRCA2/FANCD1 loading onto damaged chromatin. May also be involved in B-cell immunoglobulin isotype switching. This chain is Fanconi anemia group D2 protein homolog (Fancd2), found in Mus musculus (Mouse).